Reading from the N-terminus, the 124-residue chain is MPTIQQLVRKGRSPKVVNTNGPALQGNPMRRGVCTRVYTTTPTKPNSAVRKVARVRLNGGIEVTAYIPGEGHNLQEHSIVLVRGGRVKDLPGVRYKIVRGALDTQGVKNRGQARSRYGAKKEKK.

Asp-89 is modified (3-methylthioaspartic acid). The interval Gln-105–Lys-124 is disordered. A compositionally biased stretch (basic residues) spans Gly-111 to Lys-124.

The protein belongs to the universal ribosomal protein uS12 family. Part of the 30S ribosomal subunit. Contacts proteins S8 and S17. May interact with IF1 in the 30S initiation complex.

Functionally, with S4 and S5 plays an important role in translational accuracy. Its function is as follows. Interacts with and stabilizes bases of the 16S rRNA that are involved in tRNA selection in the A site and with the mRNA backbone. Located at the interface of the 30S and 50S subunits, it traverses the body of the 30S subunit contacting proteins on the other side and probably holding the rRNA structure together. The combined cluster of proteins S8, S12 and S17 appears to hold together the shoulder and platform of the 30S subunit. This chain is Small ribosomal subunit protein uS12, found in Micrococcus luteus (Micrococcus lysodeikticus).